The sequence spans 200 residues: Small ribosomal subunit protein eS8A (200 aa).

Disordered regions lie at residues 1 to 40 (MGIT…RIGP) and 123 to 145 (SKGK…KHSA). Residues 135–145 (KSKHVQRKHSA) show a composition bias toward basic residues.

It belongs to the eukaryotic ribosomal protein eS8 family. In terms of assembly, component of the small ribosomal subunit (SSU). Mature yeast ribosomes consist of a small (40S) and a large (60S) subunit. The 40S small subunit contains 1 molecule of ribosomal RNA (18S rRNA) and at least 33 different proteins. The large 60S subunit contains 3 rRNA molecules (25S, 5.8S and 5S rRNA) and at least 46 different proteins.

It is found in the cytoplasm. Its function is as follows. Component of the ribosome, a large ribonucleoprotein complex responsible for the synthesis of proteins in the cell. The small ribosomal subunit (SSU) binds messenger RNAs (mRNAs) and translates the encoded message by selecting cognate aminoacyl-transfer RNA (tRNA) molecules. The large subunit (LSU) contains the ribosomal catalytic site termed the peptidyl transferase center (PTC), which catalyzes the formation of peptide bonds, thereby polymerizing the amino acids delivered by tRNAs into a polypeptide chain. The nascent polypeptides leave the ribosome through a tunnel in the LSU and interact with protein factors that function in enzymatic processing, targeting, and the membrane insertion of nascent chains at the exit of the ribosomal tunnel. This chain is Small ribosomal subunit protein eS8A (rps801), found in Schizosaccharomyces pombe (strain 972 / ATCC 24843) (Fission yeast).